A 723-amino-acid chain; its full sequence is Tripartite motif-containing protein 42 (723 aa).

Residues 146-192 (CPMCNRLRLHSFMLPCNHSLCEKCLRQLQKHAEVTENFFILICPMCS) form an RING-type zinc finger. 2 consecutive B box-type zinc fingers follow at residues 235-280 (PILC…FVDT) and 285-326 (QDEK…TVSL). 4 residues coordinate Zn(2+): cysteine 290, histidine 293, cysteine 313, and histidine 318. A coiled-coil region spans residues 382–412 (KLRAILQEKEKIIMEQIENLEVSRQKEIEKY). In terms of domain architecture, COS spans 434-492 (LKETGQVAFLQSAKILVDQIEEGIQNTFRPDPQLRLHSLHCIPLDFAELSNAIHELFPT). The region spanning 603–701 (TPGPIVIYQT…DICKVVTPDG (99 aa)) is the Fibronectin type-III domain.

This sequence belongs to the TRIM/RBCC family.

This Mus musculus (Mouse) protein is Tripartite motif-containing protein 42 (Trim42).